The following is a 312-amino-acid chain: uncharacterized protein (312 aa).

8 helical membrane passes run 4-24, 45-65, 75-95, 117-137, 171-191, 217-237, 253-275, and 280-299; these read IFLAGLAAGFQTTWTLGKVIF, LITPVMGLFGLSGEAAIPLVL, IAGILTLDLSVKEVFILAVML, VILAVRIGLAAVSAIVINLIW, GLGVLQLAAIVIPLMIIIQFL, TSMTMVTGLTIGLAYGAGVMI, AFIFLVACHAVVEDTLVFIPLGI, and LLLIRVTTAVLLTMAIAHTW.

It localises to the cell membrane. This is an uncharacterized protein from Bacillus subtilis (strain 168).